A 235-amino-acid polypeptide reads, in one-letter code: Ribosomal RNA small subunit methyltransferase G (235 aa).

Residues Gly-74, Phe-79, 97-99 (EAT), 125-126 (AE), and Arg-144 contribute to the S-adenosyl-L-methionine site.

It belongs to the methyltransferase superfamily. RNA methyltransferase RsmG family.

It localises to the cytoplasm. Specifically methylates the N7 position of a guanine in 16S rRNA. This is Ribosomal RNA small subunit methyltransferase G from Dehalococcoides mccartyi (strain ATCC BAA-2100 / JCM 16839 / KCTC 5957 / BAV1).